The chain runs to 246 residues: 3-oxoacyl-[acyl-carrier-protein] reductase FabG (246 aa).

Residues 11-14, S36, 62-63, and N89 contribute to the NADP(+) site; these read GASR and DV. Substrate is bound at residue S141. The Proton acceptor role is filled by Y154. Residues 154–158 and I187 each bind NADP(+); that span reads YVAAK.

Belongs to the short-chain dehydrogenases/reductases (SDR) family. Homotetramer.

The catalysed reaction is a (3R)-hydroxyacyl-[ACP] + NADP(+) = a 3-oxoacyl-[ACP] + NADPH + H(+). It participates in lipid metabolism; fatty acid biosynthesis. In terms of biological role, catalyzes the NADPH-dependent reduction of beta-ketoacyl-ACP substrates to beta-hydroxyacyl-ACP products, the first reductive step in the elongation cycle of fatty acid biosynthesis. The chain is 3-oxoacyl-[acyl-carrier-protein] reductase FabG (fabG) from Bacillus subtilis (strain 168).